Here is a 209-residue protein sequence, read N- to C-terminus: Dual specificity protein phosphatase 22 (209 aa).

Residues 4 to 144 form the Tyrosine-protein phosphatase domain; the sequence is GMNKILPSLF…LEDFGKHDVY (141 aa). The active-site Phosphocysteine intermediate is cysteine 88. Positions 170-193 are disordered; the sequence is DKHKQQEAAESQSATSSGRQWSSH. The span at 177–193 shows a compositional bias: low complexity; sequence AAESQSATSSGRQWSSH.

This sequence belongs to the protein-tyrosine phosphatase family. Non-receptor class dual specificity subfamily.

It is found in the cytoplasm. Its subcellular location is the nucleus. The catalysed reaction is O-phospho-L-tyrosyl-[protein] + H2O = L-tyrosyl-[protein] + phosphate. It catalyses the reaction O-phospho-L-seryl-[protein] + H2O = L-seryl-[protein] + phosphate. It carries out the reaction O-phospho-L-threonyl-[protein] + H2O = L-threonyl-[protein] + phosphate. In terms of biological role, activates the Jnk signaling pathway. Dephosphorylates and deactivates p38 and stress-activated protein kinase/c-Jun N-terminal kinase (SAPK/JNK). The sequence is that of Dual specificity protein phosphatase 22 (dusp22) from Xenopus tropicalis (Western clawed frog).